Consider the following 474-residue polypeptide: Coronin-1C (474 aa).

WD repeat units follow at residues 25-70 (DDIR…GRID), 78-118 (GHTG…LTLS), 128-168 (GHSK…ALIN), 172-202 (MHSD…RVID), 215-249 (AHEG…ALWN), and 263-303 (DTSN…PYVH). Positions 436-474 (QNEAKLDEILKEIKSIKDTICNQDERISKLEQQMAKIAA) form a coiled coil. An N6-acetyllysine modification is found at Lys-446.

This sequence belongs to the WD repeat coronin family. As to quaternary structure, binds F-actin. Interacts with RCC2. Interacts preferentially with nucleotide-free and GDP-bound RAC1. Interacts with VIM (via head domain). Isoform 1 and isoform 2 appear as homotrimers, while isoform 3 seems to exist as monomers. Interacts with MICAL2; this interaction recruits MICAL2 to the actin filaments. As to expression, ubiquitous.

The protein resides in the cell membrane. It localises to the cell projection. It is found in the lamellipodium. The protein localises to the ruffle membrane. Its subcellular location is the cytoplasm. The protein resides in the cytoskeleton. It localises to the cell cortex. It is found in the endosome membrane. The protein localises to the sarcolemma. Its subcellular location is the myofibril. The protein resides in the sarcomere. It localises to the synapse. In terms of biological role, plays a role in directed cell migration by regulating the activation and subcellular location of RAC1. Increases the presence of activated RAC1 at the leading edge of migrating cells. Required for normal organization of the cytoskeleton, including the actin cytoskeleton, microtubules and the vimentin intermediate filaments. Plays a role in endoplasmic reticulum-associated endosome fission: localizes to endosome membrane tubules and promotes recruitment of TMCC1, leading to recruitment of the endoplasmic reticulum to endosome tubules for fission. Endosome membrane fission of early and late endosomes is essential to separate regions destined for lysosomal degradation from carriers to be recycled to the plasma membrane. Required for normal cell proliferation, cell migration, and normal formation of lamellipodia. Required for normal distribution of mitochondria within cells. Its function is as follows. Involved in myogenic differentiation. The sequence is that of Coronin-1C from Homo sapiens (Human).